An 876-amino-acid polypeptide reads, in one-letter code: Valine--tRNA ligase (876 aa).

Residues 43–53 (PNVTGVLHMGH) carry the 'HIGH' region motif. The 'KMSKS' region motif lies at 533–537 (KMSKS). Lysine 536 contacts ATP. A coiled-coil region spans residues 804 to 876 (GALIDVEEEI…DSLNQLQSTK (73 aa)).

The protein belongs to the class-I aminoacyl-tRNA synthetase family. ValS type 1 subfamily. In terms of assembly, monomer.

Its subcellular location is the cytoplasm. It catalyses the reaction tRNA(Val) + L-valine + ATP = L-valyl-tRNA(Val) + AMP + diphosphate. Its function is as follows. Catalyzes the attachment of valine to tRNA(Val). As ValRS can inadvertently accommodate and process structurally similar amino acids such as threonine, to avoid such errors, it has a 'posttransfer' editing activity that hydrolyzes mischarged Thr-tRNA(Val) in a tRNA-dependent manner. The polypeptide is Valine--tRNA ligase (Porphyromonas gingivalis (strain ATCC 33277 / DSM 20709 / CIP 103683 / JCM 12257 / NCTC 11834 / 2561)).